The following is a 597-amino-acid chain: DNA ligase (597 aa).

Glu262 is an ATP binding site. Lys264 serves as the catalytic N6-AMP-lysine intermediate. Arg269, Arg284, Glu314, Phe354, Arg431, and Lys437 together coordinate ATP.

This sequence belongs to the ATP-dependent DNA ligase family. It depends on Mg(2+) as a cofactor. Mn(2+) is required as a cofactor.

It catalyses the reaction ATP + (deoxyribonucleotide)n-3'-hydroxyl + 5'-phospho-(deoxyribonucleotide)m = (deoxyribonucleotide)n+m + AMP + diphosphate.. It carries out the reaction ADP + (deoxyribonucleotide)n-3'-hydroxyl + 5'-phospho-(deoxyribonucleotide)m = (deoxyribonucleotide)n+m + AMP + phosphate.. The catalysed reaction is GTP + (deoxyribonucleotide)n-3'-hydroxyl + 5'-phospho-(deoxyribonucleotide)m = (deoxyribonucleotide)n+m + GMP + diphosphate.. Inhibited by Ca(2+) and Zn(2+). DNA ligase that seals nicks in double-stranded DNA during DNA replication, DNA recombination and DNA repair. Can use both ATP and ADP. The sequence is that of DNA ligase from Staphylothermus marinus (strain ATCC 43588 / DSM 3639 / JCM 9404 / F1).